Consider the following 76-residue polypeptide: Large ribosomal subunit protein uL29 (76 aa).

The protein belongs to the universal ribosomal protein uL29 family.

The polypeptide is Large ribosomal subunit protein uL29 (Corynebacterium efficiens (strain DSM 44549 / YS-314 / AJ 12310 / JCM 11189 / NBRC 100395)).